The sequence spans 58 residues: Small ribosomal subunit protein bS21 (58 aa).

The protein belongs to the bacterial ribosomal protein bS21 family.

The chain is Small ribosomal subunit protein bS21 from Picosynechococcus sp. (strain ATCC 27264 / PCC 7002 / PR-6) (Agmenellum quadruplicatum).